The sequence spans 254 residues: Geranylgeranylglyceryl phosphate synthase (254 aa).

Mg(2+) contacts are provided by aspartate 27 and serine 56. Residues tyrosine 174 to glycine 180, glycine 212 to glycine 213, and glycine 234 to threonine 235 each bind sn-glycerol 1-phosphate.

It belongs to the GGGP/HepGP synthase family. Group II subfamily. As to quaternary structure, homohexamer. Mg(2+) is required as a cofactor.

The protein localises to the cytoplasm. It carries out the reaction sn-glycerol 1-phosphate + (2E,6E,10E)-geranylgeranyl diphosphate = sn-3-O-(geranylgeranyl)glycerol 1-phosphate + diphosphate. Its pathway is membrane lipid metabolism; glycerophospholipid metabolism. Functionally, prenyltransferase that catalyzes the transfer of the geranylgeranyl moiety of geranylgeranyl diphosphate (GGPP) to the C3 hydroxyl of sn-glycerol-1-phosphate (G1P). This reaction is the first ether-bond-formation step in the biosynthesis of archaeal membrane lipids. The protein is Geranylgeranylglyceryl phosphate synthase of Aeropyrum pernix (strain ATCC 700893 / DSM 11879 / JCM 9820 / NBRC 100138 / K1).